A 339-amino-acid chain; its full sequence is Uridylate kinase PUMPKIN, chloroplastic (339 aa).

A chloroplast-targeting transit peptide spans 1–53 (MAIPLPLTSCSPISTSSSISRTSFVPLTLRNRTFFSNQNYSRRVLISCSSSLS). Positions 52–79 (LSSDNGSSPDSMNGNGNGNGSSLNGQSS) are enriched in low complexity. Residues 52 to 89 (LSSDNGSSPDSMNGNGNGNGSSLNGQSSFPRLPSFDGT) are disordered. 102–105 (KVSG) provides a ligand contact to ATP. Residues 110–115 (GDEEQN) are involved in allosteric activation by GTP. Glycine 144 provides a ligand contact to UMP. 2 residues coordinate ATP: glycine 145 and arginine 149. Aspartate 165 serves as a coordination point for UMP. Residues 180–184 (QATME) and 189–191 (PTR) each bind ATP. 226–233 (TGNPFFTT) serves as a coordination point for UMP. Residues threonine 253, phenylalanine 259, and aspartate 262 each contribute to the ATP site.

Belongs to the UMP kinase family. In terms of assembly, homomultimer. Homohexamer. Forms RNA-containing megadalton-sized complexes. Expressed exclusively in leaves, but not in roots.

It is found in the plastid. Its subcellular location is the chloroplast stroma. The catalysed reaction is UMP + ATP = UDP + ADP. The protein operates within pyrimidine metabolism; CTP biosynthesis via de novo pathway; UDP from UMP (UMPK route): step 1/1. Its function is as follows. Catalyzes the reversible phosphorylation of UMP to UDP. Required for specific post-transcriptional processes of many plastid transcripts (e.g. PSI (PsaA, PsaF), PSII (D1, CP43, CP47), Cytochrome b(6)f (Cytb(6)), ATP synthase (AtpC), LHCs (LHCa3, LHCb2), and NDH (NdhH)), thus being essential for retaining photosynthetic activity in chloroplasts. Associates with group II introns of the plastid transcripts trnG-UCC, trnV-UAC, petB, petD and ndhA to stabilize corresponding precursor RNAs. The polypeptide is Uridylate kinase PUMPKIN, chloroplastic (Arabidopsis thaliana (Mouse-ear cress)).